A 442-amino-acid chain; its full sequence is D-serine dehydratase (442 aa).

Lys118 is modified (N6-(pyridoxal phosphate)lysine).

Belongs to the serine/threonine dehydratase family. DsdA subfamily. In terms of assembly, monomer. Pyridoxal 5'-phosphate is required as a cofactor.

The catalysed reaction is D-serine = pyruvate + NH4(+). This is D-serine dehydratase from Escherichia coli O81 (strain ED1a).